The chain runs to 343 residues: Ribosomal RNA small subunit methyltransferase C (343 aa).

The protein belongs to the methyltransferase superfamily. RsmC family. In terms of assembly, monomer.

It is found in the cytoplasm. It catalyses the reaction guanosine(1207) in 16S rRNA + S-adenosyl-L-methionine = N(2)-methylguanosine(1207) in 16S rRNA + S-adenosyl-L-homocysteine + H(+). Specifically methylates the guanine in position 1207 of 16S rRNA in the 30S particle. This is Ribosomal RNA small subunit methyltransferase C from Escherichia coli (strain 55989 / EAEC).